The chain runs to 114 residues: Flagellar hook-basal body complex protein FliE (114 aa).

This sequence belongs to the FliE family.

It is found in the bacterial flagellum basal body. The polypeptide is Flagellar hook-basal body complex protein FliE (Desulfitobacterium hafniense (strain Y51)).